The following is a 310-amino-acid chain: p-hydroxybenzoic acid efflux pump subunit AaeA (310 aa).

Residues 12–32 (AITLVLVILAFIAIFRAWVYY) traverse the membrane as a helical segment.

The protein belongs to the membrane fusion protein (MFP) (TC 8.A.1) family.

It localises to the cell inner membrane. Functionally, forms an efflux pump with AaeB. In Salmonella heidelberg (strain SL476), this protein is p-hydroxybenzoic acid efflux pump subunit AaeA.